The primary structure comprises 964 residues: SKI family transcriptional corepressor 1 (964 aa).

Disordered regions lie at residues 45-72, 278-365, 414-461, 525-587, 610-768, and 794-842; these read TQLGPGREGSSSPNSKQELQPYSGSSAL, RTFS…GGSA, AGEP…WGHQ, AGGG…RKSS, REAY…GAAK, and LCTP…EDGL. A compositionally biased stretch (gly residues) spans 283–310; that stretch reads QGGGGGGANSGSGGAGKGGAGGGGGPGC. Low complexity predominate over residues 345 to 355; the sequence is ALGLAAAASGP. 2 stretches are compositionally biased toward gly residues: residues 356–365 and 417–440; these read AGPGGPGGSA and PKGGPGTGSSGGAGTAAGAGGPGA. Residues 571-583 are compositionally biased toward pro residues; it reads SLGPLPPPPPPPA. Residues 652 to 661 show a composition bias toward acidic residues; it reads DTADEPEVDV. Positions 798–808 are enriched in basic and acidic residues; that stretch reads ETHEPDKEDNH. Polar residues predominate over residues 823-834; it reads DQRSVSQPSPAN. The stretch at 853 to 921 forms a coiled coil; that stretch reads EKDIENLARE…DTLCNELDQE (69 aa).

This sequence belongs to the SKI family. In terms of assembly, interacts with SMAD1, SMAD2 and SMAD3. Interacts with LBX1. Expressed in brain with higher levels in embryo than adult. Expressed by migratory precursors of Purkinje cells in the postnatal brain. Also expressed in adult testis.

The protein localises to the nucleus. Inhibits BMP signaling. Acts as a transcriptional corepressor of LBX1. The polypeptide is SKI family transcriptional corepressor 1 (Skor1) (Mus musculus (Mouse)).